Reading from the N-terminus, the 666-residue chain is Probable potassium transport system protein Kup (666 aa).

A run of 12 helical transmembrane segments spans residues Gly16–Ile36, Ile58–Leu78, Pro100–Thr120, Ile141–Gly161, Phe165–Leu185, Ile221–Leu241, Trp253–Ala273, Val294–Gly314, Leu343–Phe363, Tyr373–Ile393, Pro399–Ala419, and Phe424–Ile444.

This sequence belongs to the HAK/KUP transporter (TC 2.A.72) family.

It localises to the cell membrane. The enzyme catalyses K(+)(in) + H(+)(in) = K(+)(out) + H(+)(out). Functionally, transport of potassium into the cell. Likely operates as a K(+):H(+) symporter. This Streptococcus pyogenes serotype M1 protein is Probable potassium transport system protein Kup.